Reading from the N-terminus, the 285-residue chain is ATP synthase gamma chain (285 aa).

It belongs to the ATPase gamma chain family. F-type ATPases have 2 components, CF(1) - the catalytic core - and CF(0) - the membrane proton channel. CF(1) has five subunits: alpha(3), beta(3), gamma(1), delta(1), epsilon(1). CF(0) has three main subunits: a, b and c.

It localises to the cell inner membrane. Its function is as follows. Produces ATP from ADP in the presence of a proton gradient across the membrane. The gamma chain is believed to be important in regulating ATPase activity and the flow of protons through the CF(0) complex. This chain is ATP synthase gamma chain, found in Protochlamydia amoebophila (strain UWE25).